Reading from the N-terminus, the 776-residue chain is Angiomotin-like protein 2 (776 aa).

The tract at residues 41 to 88 (GGAGAGGTGSPQASAEILAPEDTQVLQQATRQEPQGQEHQGGESHLAE) is disordered. The tract at residues 101–307 (GEELPTYEEA…STQTSSAPSG (207 aa)) is required for interaction with CDH5. Phosphotyrosine is present on Tyr107. Disordered stretches follow at residues 119–142 (AQQA…GHRS), 169–215 (RNGA…QYPH), and 283–309 (GPLG…SGSA). The segment covering 177–192 (HMSSSHSFPQLARNQQ) has biased composition (polar residues). Positions 196–213 (PRGPPAEGPEPRGPPPQY) are enriched in pro residues. A required for interaction with CDH1 region spans residues 220–307 (HETATAVTDP…STQTSSAPSG (88 aa)). Positions 297-306 (ASTQTSSAPS) are enriched in polar residues. Coiled coils occupy residues 314-509 (METL…LELR) and 543-570 (ALRL…WEQK). Glycyl lysine isopeptide (Lys-Gly) (interchain with G-Cter in ubiquitin) cross-links involve residues Lys347 and Lys408. 2 disordered regions span residues 591-620 (QRDT…GHRH) and 677-743 (TQGW…LDPD). Residues 678 to 687 (QGWQSLSSSE) are compositionally biased toward polar residues. Ser756 and Ser759 each carry phosphoserine. Residues 773 to 776 (EILI) carry the PDZ-binding motif.

The protein belongs to the angiomotin family. In terms of assembly, part of a complex composed of AMOTL2, MAGI1 and CDH5, within the complex AMOTL2 acts as a scaffold protein for the interaction of MAGI1 with CDH5. The complex is required for coupling actin fibers to cell junctions in endothelial cells. Within the complex AMOTL2 (via its N-terminus) interacts with CDH5. Interacts (via N-terminus) with MAGI1. Interacts (via N-terminus) with ACTB; the interaction facilitates binding of cell junction complexes to actin fibers in endothelial cells. Interacts with CDH1; the interaction may facilitate binding of radial actin fibers to cell junction complexes. Interacts with SRC. Interacts with YAP1; the interaction is required for ubiquitination of AMOTL2 and localization of YAP1 to tight junctions. Interacts with WWP1; the interaction facilitates WWP1 interaction with the Crumbs complex and subsequent WWP1 translocation to the plasma membrane. WPP1 interaction with the Crumbs complex promotes WPP1 monoubiquitination of AMOTL2 which subsequently activates the Hippo signaling pathway. When ubiquitinated interacts with LATS2 (via UBA domain); the interaction promotes LATS2 phosphorylation of YAP1. Interacts (via PPXY motif) with WWTR1/TAZ (via WW domain); the interaction promotes WWTR1/TAZ localization to the cytoplasm and thereby inhibition of its transcriptional properties. Interacts with PHLDB2; interaction may facilitate PHLDB2 localization to the myotube podosome cortex that surrounds the core. In terms of processing, monoubiquitinated at Lys-347 and Lys-408 by Crumbs complex-bound WWP1. De-ubiquitinated at Lys-347 and Lys-408 by USP9X; the interaction may be promoted by cell contact inhibition. Deubiquitination of AMOTL2 negatively regulates Hippo signaling activation. Phosphorylation at Tyr-107 is necessary for efficient binding to SRC and synergistically functioning with SRC to activate the downstream MAPK pathway.

The protein resides in the recycling endosome. It is found in the cytoplasm. The protein localises to the cell projection. It localises to the podosome. Its subcellular location is the cell junction. In terms of biological role, regulates the translocation of phosphorylated SRC to peripheral cell-matrix adhesion sites. Required for proper architecture of actin filaments. Plays a role in coupling actin fibers to cell junctions in endothelial cells and is therefore required for correct endothelial cell morphology via facilitating transcellular transmission of mechanical force resulting in endothelial cell elongation. Required for the anchoring of radial actin fibers to CDH1 junction complexes at the cell membrane which facilitates organization of radial actin fiber structure and cellular response to contractile forces. This contributes to maintenance of cell area, size, shape, epithelial sheet organization and trophectoderm cell properties that facilitate blastocyst zona hatching. Inhibits the Wnt/beta-catenin signaling pathway, probably by recruiting CTNNB1 to recycling endosomes and hence preventing its translocation to the nucleus. Participates in angiogenesis. Activates the Hippo signaling pathway in response to cell contact inhibition via interaction with and ubiquitination by Crumbs complex-bound WWP1. Ubiquitinated AMOTL2 then interacts with LATS2 which in turn phosphorylates YAP1, excluding it from the nucleus and localizing it to the cytoplasm and tight junctions, therefore ultimately repressing YAP1-driven transcription of target genes. Acts to inhibit WWTR1/TAZ transcriptional coactivator activity via sequestering WWTR1/TAZ in the cytoplasm and at tight junctions. Regulates the size and protein composition of the podosome cortex and core at myofibril neuromuscular junctions. Selectively promotes FGF-induced MAPK activation through SRC. May play a role in the polarity, proliferation and migration of endothelial cells. The chain is Angiomotin-like protein 2 from Canis lupus familiaris (Dog).